A 187-amino-acid polypeptide reads, in one-letter code: Large ribosomal subunit protein uL5 (187 aa).

This sequence belongs to the universal ribosomal protein uL5 family. In terms of assembly, part of the 50S ribosomal subunit; part of the 5S rRNA/L5/L18/L25 subcomplex. Contacts the 5S rRNA and the P site tRNA. Forms a bridge to the 30S subunit in the 70S ribosome.

This is one of the proteins that bind and probably mediate the attachment of the 5S RNA into the large ribosomal subunit, where it forms part of the central protuberance. In the 70S ribosome it contacts protein S13 of the 30S subunit (bridge B1b), connecting the 2 subunits; this bridge is implicated in subunit movement. Contacts the P site tRNA; the 5S rRNA and some of its associated proteins might help stabilize positioning of ribosome-bound tRNAs. This chain is Large ribosomal subunit protein uL5, found in Dinoroseobacter shibae (strain DSM 16493 / NCIMB 14021 / DFL 12).